Here is a 540-residue protein sequence, read N- to C-terminus: Glucose-6-phosphate isomerase (540 aa).

Glu350 acts as the Proton donor in catalysis. Active-site residues include His381 and Lys503.

It belongs to the GPI family.

It localises to the cytoplasm. It carries out the reaction alpha-D-glucose 6-phosphate = beta-D-fructose 6-phosphate. The protein operates within carbohydrate biosynthesis; gluconeogenesis. It participates in carbohydrate degradation; glycolysis; D-glyceraldehyde 3-phosphate and glycerone phosphate from D-glucose: step 2/4. In terms of biological role, catalyzes the reversible isomerization of glucose-6-phosphate to fructose-6-phosphate. The protein is Glucose-6-phosphate isomerase of Burkholderia cenocepacia (strain ATCC BAA-245 / DSM 16553 / LMG 16656 / NCTC 13227 / J2315 / CF5610) (Burkholderia cepacia (strain J2315)).